The primary structure comprises 195 residues: Peptidyl-tRNA hydrolase (195 aa).

Y17 is a binding site for tRNA. H22 functions as the Proton acceptor in the catalytic mechanism. Residues Y68, N70, and N116 each contribute to the tRNA site.

Belongs to the PTH family. As to quaternary structure, monomer.

It localises to the cytoplasm. The catalysed reaction is an N-acyl-L-alpha-aminoacyl-tRNA + H2O = an N-acyl-L-amino acid + a tRNA + H(+). Functionally, hydrolyzes ribosome-free peptidyl-tRNAs (with 1 or more amino acids incorporated), which drop off the ribosome during protein synthesis, or as a result of ribosome stalling. In terms of biological role, catalyzes the release of premature peptidyl moieties from peptidyl-tRNA molecules trapped in stalled 50S ribosomal subunits, and thus maintains levels of free tRNAs and 50S ribosomes. This is Peptidyl-tRNA hydrolase from Shewanella frigidimarina (strain NCIMB 400).